A 212-amino-acid polypeptide reads, in one-letter code: Peptide methionine sulfoxide reductase MsrA (212 aa).

Residue C51 is part of the active site.

This sequence belongs to the MsrA Met sulfoxide reductase family.

It catalyses the reaction L-methionyl-[protein] + [thioredoxin]-disulfide + H2O = L-methionyl-(S)-S-oxide-[protein] + [thioredoxin]-dithiol. The enzyme catalyses [thioredoxin]-disulfide + L-methionine + H2O = L-methionine (S)-S-oxide + [thioredoxin]-dithiol. Its function is as follows. Has an important function as a repair enzyme for proteins that have been inactivated by oxidation. Catalyzes the reversible oxidation-reduction of methionine sulfoxide in proteins to methionine. The polypeptide is Peptide methionine sulfoxide reductase MsrA (Vibrio parahaemolyticus serotype O3:K6 (strain RIMD 2210633)).